A 200-amino-acid polypeptide reads, in one-letter code: Pyridoxine/pyridoxamine 5'-phosphate oxidase (200 aa).

FMN is bound by residues 48–53, 63–64, K70, and Q92; these read RMVLLK and YT. K53 provides a ligand contact to substrate. The substrate site is built by Y110, R114, and S118. FMN is bound by residues 127–128 and W171; that span reads QS. Position 177–179 (177–179) interacts with substrate; that stretch reads RLH. Residue R181 participates in FMN binding.

It belongs to the pyridoxamine 5'-phosphate oxidase family. As to quaternary structure, homodimer. FMN is required as a cofactor.

It carries out the reaction pyridoxamine 5'-phosphate + O2 + H2O = pyridoxal 5'-phosphate + H2O2 + NH4(+). The catalysed reaction is pyridoxine 5'-phosphate + O2 = pyridoxal 5'-phosphate + H2O2. Its pathway is cofactor metabolism; pyridoxal 5'-phosphate salvage; pyridoxal 5'-phosphate from pyridoxamine 5'-phosphate: step 1/1. It participates in cofactor metabolism; pyridoxal 5'-phosphate salvage; pyridoxal 5'-phosphate from pyridoxine 5'-phosphate: step 1/1. Its function is as follows. Catalyzes the oxidation of either pyridoxine 5'-phosphate (PNP) or pyridoxamine 5'-phosphate (PMP) into pyridoxal 5'-phosphate (PLP). The sequence is that of Pyridoxine/pyridoxamine 5'-phosphate oxidase from Cereibacter sphaeroides (strain ATCC 17029 / ATH 2.4.9) (Rhodobacter sphaeroides).